The following is a 227-amino-acid chain: Cytidylate kinase (227 aa).

Position 12–20 (12–20) interacts with ATP; that stretch reads GPSGVGKGT.

This sequence belongs to the cytidylate kinase family. Type 1 subfamily.

Its subcellular location is the cytoplasm. It catalyses the reaction CMP + ATP = CDP + ADP. The enzyme catalyses dCMP + ATP = dCDP + ADP. The polypeptide is Cytidylate kinase (Shewanella denitrificans (strain OS217 / ATCC BAA-1090 / DSM 15013)).